Consider the following 144-residue polypeptide: MSELFSNDNIFLNVNVNSQNEAIEKAGKALVDSGAVTDAYIQAMKDREQVVSTFMGNGLAIPHGTDEAKTNVIHSGLTLLQIPEGVDWDGEVVKVVVGIAGKDGEHLDLLSKIAITFSEEGNVDRIVQAKSAEEIKQVFEEADA.

A PTS EIIA type-2 domain is found at 3–142; it reads ELFSNDNIFL…EEIKQVFEEA (140 aa). Residue H63 is the Tele-phosphohistidine intermediate of the active site. H63 is subject to Phosphohistidine; by HPr.

In terms of assembly, homodimer or homotrimer. Seems to be a monomer when not phosphorylated.

It is found in the cytoplasm. In terms of biological role, the phosphoenolpyruvate-dependent sugar phosphotransferase system (sugar PTS), a major carbohydrate active transport system, catalyzes the phosphorylation of incoming sugar substrates concomitantly with their translocation across the cell membrane. The enzyme II CmtAB PTS system is involved in D-mannitol transport. This Staphylococcus aureus (strain MRSA252) protein is Mannitol-specific phosphotransferase enzyme IIA component (mtlF).